The primary structure comprises 318 residues: Gamma-glutamyl hydrolase (318 aa).

The signal sequence occupies residues 1 to 24 (MARLGRLLSVLGLVLCGATGLGLS). Positions 25-318 (APPAPTPKKP…SSFQQSYIFD (294 aa)) constitute a Gamma-glutamyl hydrolase domain. Asparagine 116 carries N-linked (GlcNAc...) asparagine glycosylation. Catalysis depends on cysteine 134, which acts as the Nucleophile. N-linked (GlcNAc...) asparagine glycosylation is found at asparagine 163 and asparagine 203. Histidine 244 functions as the Proton donor in the catalytic mechanism. Asparagine 307 carries an N-linked (GlcNAc...) asparagine glycan.

The protein belongs to the peptidase C26 family. In terms of assembly, homodimer.

The protein localises to the secreted. It localises to the extracellular space. It is found in the lysosome. The protein resides in the melanosome. It catalyses the reaction (6S)-5,6,7,8-tetrahydrofolyl-(gamma-L-Glu)(n) + (n-1) H2O = (6S)-5,6,7,8-tetrahydrofolate + (n-1) L-glutamate. In terms of biological role, hydrolyzes the polyglutamate sidechains of pteroylpolyglutamates. Progressively removes gamma-glutamyl residues from pteroylpoly-gamma-glutamate to yield pteroyl-alpha-glutamate (folic acid) and free glutamate. May play an important role in the bioavailability of dietary pteroylpolyglutamates and in the metabolism of pteroylpolyglutamates and antifolates. Exhibits either endo- or exopeptidase activity depending upon the tissue of origin. When secreted, it acts primarily as an endopeptidase. The chain is Gamma-glutamyl hydrolase (GGH) from Bos taurus (Bovine).